The sequence spans 122 residues: Large ribosomal subunit protein uL14 (122 aa).

The protein belongs to the universal ribosomal protein uL14 family. Part of the 50S ribosomal subunit. Forms a cluster with proteins L3 and L19. In the 70S ribosome, L14 and L19 interact and together make contacts with the 16S rRNA in bridges B5 and B8.

In terms of biological role, binds to 23S rRNA. Forms part of two intersubunit bridges in the 70S ribosome. This chain is Large ribosomal subunit protein uL14, found in Mycobacterium marinum (strain ATCC BAA-535 / M).